Consider the following 310-residue polypeptide: MNNQQSRGALGTSGATPDLPDATPGLSRNPVGGHVPVAGGLHSVGLAYARDLAAEAVQVFVANPRGWATPAGNPRQDEEFRAACAAESIPAYVHAPYLINFGSHTEATVEKSVESLRHSLRRGREIGALGVVVHTGSATGGRERSVALAQVREHLLPLLDELTHDDDPYLLLESTAGQGASLCSRTWDFGPYFEALDAHPKLGVCLDTCHIFAAGHDLTGPSGMHQTLDLLVDTVGEGRLKLIHANDSKDVVGAHKDRHENIGSGHIGEDPFRALMTHPATEGVPLIIETPGGKEGHAADVEQLKKLRDG.

The interval 1–31 is disordered; that stretch reads MNNQQSRGALGTSGATPDLPDATPGLSRNPV. Zn(2+) contacts are provided by His94, His134, Glu173, Asp207, His210, His244, Asp257, His259, and Glu289.

This sequence belongs to the AP endonuclease 2 family. Zn(2+) is required as a cofactor.

It catalyses the reaction Endonucleolytic cleavage to 5'-phosphooligonucleotide end-products.. In terms of biological role, endonuclease IV plays a role in DNA repair. It cleaves phosphodiester bonds at apurinic or apyrimidinic (AP) sites, generating a 3'-hydroxyl group and a 5'-terminal sugar phosphate. This chain is Probable endonuclease 4, found in Streptomyces avermitilis (strain ATCC 31267 / DSM 46492 / JCM 5070 / NBRC 14893 / NCIMB 12804 / NRRL 8165 / MA-4680).